We begin with the raw amino-acid sequence, 265 residues long: L-histidine 2-aminobutanoyltransferase (265 aa).

The protein belongs to the methyltransferase superfamily. CntL family.

The enzyme catalyses L-histidine + S-adenosyl-L-methionine = (2S)-2-amino-4-{[(1S)-1-carboxy-2-(1H-imidazol-4-yl)ethyl]amino}butanoate + S-methyl-5'-thioadenosine + H(+). Functionally, catalyzes the nucleophilic attack of one alpha-aminobutanoate moiety from SAM onto L-histidine to produce the intermediate (2S)-2-amino-4-{[(1S)-1-carboxy-2-(1H-imidazol-4-yl)ethyl]amino}butanoate. Functions in the biosynthesis of the metallophore yersinopine, which is involved in metal acquisition and thus enables bacterial growth inside the host, where metal access is limited. Therefore, this enzyme probably contributes to Yersinia virulence. The sequence is that of L-histidine 2-aminobutanoyltransferase from Yersinia pestis.